The following is a 266-amino-acid chain: Probable metal transport system membrane protein TP_0036 (266 aa).

The next 8 membrane-spanning stretches (helical) occupy residues 10 to 30 (AFVA…HLVL), 34 to 54 (ALMG…AVSC), 56 to 76 (IHPG…IEFL), 88 to 108 (LSIV…SGLI), 120 to 140 (ILVV…FCVG), 172 to 192 (VASV…GILV), 211 to 231 (FLLT…LGLV), and 238 to 258 (VAPG…VIAL).

Belongs to the ABC-3 integral membrane protein family.

The protein resides in the cell inner membrane. Functionally, part of an ATP-driven transport system TP_0034/TP_0035/TP_0036 for a metal. This Treponema pallidum (strain Nichols) protein is Probable metal transport system membrane protein TP_0036.